Reading from the N-terminus, the 612-residue chain is Cyclin-dependent kinase G1 (612 aa).

Over residues 26–54 the composition is skewed to basic and acidic residues; it reads SRDVYVRQSGRDDERRQIKRPSDHDLRRN. Disordered regions lie at residues 26-60 and 239-278; these read SRDVYVRQSGRDDERRQIKRPSDHDLRRNDGRHRS and CYSSGSGSGHLSVEKLSADGNSGREYYSSDHDELEHEDQD. The 297-residue stretch at 297–593 folds into the Protein kinase domain; that stretch reads FQKLNKINEG…VEDALNHGWF (297 aa). ATP is bound by residues 303–311 and K326; that span reads INEGTYGIV. Y308 is subject to Phosphotyrosine. D426 acts as the Proton acceptor in catalysis. Residue S453 is modified to Phosphoserine. At T459 the chain carries Phosphothreonine.

Belongs to the protein kinase superfamily. Ser/Thr protein kinase family. Forms a complex with CYCL1-1. Associated with the spliceosome. Interacts with RS2Z33. As to expression, expressed in leaves and inflorescences. Lower levels of expression in roots and stems.

Its subcellular location is the nucleus speckle. It carries out the reaction L-seryl-[protein] + ATP = O-phospho-L-seryl-[protein] + ADP + H(+). It catalyses the reaction L-threonyl-[protein] + ATP = O-phospho-L-threonyl-[protein] + ADP + H(+). In terms of biological role, cyclin-dependent kinase involved in pre-mRNA splicing. Required for the correct splicing of the sixth intron of CALS5 pre-mRNA. May stabilize the binding of U1 snRNP to this rare type of intron with a GC 5'SS. Involved in chromosome pairing and is required for the completion of synapsis in male meiocytes at high ambient temperatures. In Arabidopsis thaliana (Mouse-ear cress), this protein is Cyclin-dependent kinase G1 (CDKG1).